Here is a 325-residue protein sequence, read N- to C-terminus: Protein FAM50B (325 aa).

An N-acetylalanine modification is found at Ala-2. The segment at 137–160 (RRAGNLGKNPDVDTSFLPDRDREE) is disordered.

It belongs to the FAM50 family.

This is Protein FAM50B (FAM50B) from Macaca fascicularis (Crab-eating macaque).